Here is a 159-residue protein sequence, read N- to C-terminus: Small ribosomal subunit protein uS4 (159 aa).

In terms of domain architecture, S4 RNA-binding spans 106–158 (RRLQTIVYRMGLAKSIYHARQLIVHGHIAIEGRRVTSPGFLVPRELEDKITLV).

The protein belongs to the universal ribosomal protein uS4 family. Part of the 30S ribosomal subunit. Contacts protein S5. The interaction surface between S4 and S5 is involved in control of translational fidelity.

Functionally, one of the primary rRNA binding proteins, it binds directly to 16S rRNA where it nucleates assembly of the body of the 30S subunit. In terms of biological role, with S5 and S12 plays an important role in translational accuracy. The polypeptide is Small ribosomal subunit protein uS4 (Pyrobaculum arsenaticum (strain DSM 13514 / JCM 11321 / PZ6)).